We begin with the raw amino-acid sequence, 265 residues long: Mlc titration factor A (265 aa).

4 residues coordinate Zn(2+): histidine 111, histidine 148, histidine 152, and glutamate 211.

This sequence belongs to the MtfA family. In terms of assembly, interacts with Mlc. It depends on Zn(2+) as a cofactor.

It is found in the cytoplasm. Its function is as follows. Involved in the modulation of the activity of the glucose-phosphotransferase system (glucose-PTS). Interacts with the transcriptional repressor Mlc, preventing its interaction with DNA and leading to the modulation of expression of genes regulated by Mlc, including ptsG, which encodes the PTS system glucose-specific EIICB component. Functionally, shows zinc-dependent metallopeptidase activity. This Escherichia coli (strain UTI89 / UPEC) protein is Mlc titration factor A.